A 270-amino-acid chain; its full sequence is MSGGLDILSLKEDDITKMLVATTHLGSENVNFQMEQYVYKRRADGVNIINLGKTWEKLQLAARAIVAIENASDVFVISSRPIGQRAVLKFAKYTDTTPIAGRFTPGAFTNQIQPAFREPRLLVVTDPMTDHQPIMEASYVNIPVIAFTNTDSPLRYIDIAIPCNNKSAHSIGLMWWLLAREVLRLRGTISRTVEWPVVVDLYFYRDPEEAEKEEAAAKELLPPPKIEEVVDHPVEETTNWADEVAAETVGGVEDWNEDTVKTSWGSDGQF.

It belongs to the universal ribosomal protein uS2 family. As to quaternary structure, component of the small ribosomal subunit. Mature ribosomes consist of a small (40S) and a large (60S) subunit. The 40S subunit contains about 33 different proteins and 1 molecule of RNA (18S). The 60S subunit contains about 49 different proteins and 3 molecules of RNA (28S, 5.8S and 5S). Interacts with oho23B/rpS21.

Its subcellular location is the cytoplasm. It localises to the nucleus. Required for the assembly and/or stability of the 40S ribosomal subunit. Required for the processing of the 20S rRNA-precursor to mature 18S rRNA in a late step of the maturation of 40S ribosomal subunits. Required during oogenesis and imaginal development. The chain is Small ribosomal subunit protein uS2 from Drosophila persimilis (Fruit fly).